The chain runs to 224 residues: Ribosomal RNA small subunit methyltransferase G (224 aa).

S-adenosyl-L-methionine is bound by residues glycine 92, leucine 97, valine 143–glutamate 144, and arginine 156.

The protein belongs to the methyltransferase superfamily. RNA methyltransferase RsmG family.

Its subcellular location is the cytoplasm. It carries out the reaction guanosine(527) in 16S rRNA + S-adenosyl-L-methionine = N(7)-methylguanosine(527) in 16S rRNA + S-adenosyl-L-homocysteine. Its function is as follows. Specifically methylates the N7 position of guanine in position 527 of 16S rRNA. The chain is Ribosomal RNA small subunit methyltransferase G from Albidiferax ferrireducens (strain ATCC BAA-621 / DSM 15236 / T118) (Rhodoferax ferrireducens).